The chain runs to 612 residues: RNA polymerase sigma factor RpoD (612 aa).

Positions 191–206 are enriched in acidic residues; that stretch reads QQNNEEDEENNQEDHE. The interval 191 to 210 is disordered; that stretch reads QQNNEEDEENNQEDHEDDHS. The segment at 378–448 is sigma-70 factor domain-2; it reads MVEANLRLVI…TRSIADQART (71 aa). The Interaction with polymerase core subunit RpoC signature appears at 402-405; the sequence is DLIQ. A sigma-70 factor domain-3 region spans residues 457 to 533; that stretch reads ETINKLNRIS…DTTLELPLDS (77 aa). A sigma-70 factor domain-4 region spans residues 546–599; the sequence is VLSGLTAREAKVLRMRFGIDMNTDHTLEEVGKQFDVTRERIRQIEAKALRKLRH. Residues 572-591 constitute a DNA-binding region (H-T-H motif); the sequence is LEEVGKQFDVTRERIRQIEA.

Belongs to the sigma-70 factor family. RpoD/SigA subfamily. In terms of assembly, interacts transiently with the RNA polymerase catalytic core.

It localises to the cytoplasm. Its function is as follows. Sigma factors are initiation factors that promote the attachment of RNA polymerase to specific initiation sites and are then released. This sigma factor is the primary sigma factor during exponential growth. The chain is RNA polymerase sigma factor RpoD from Buchnera aphidicola subsp. Acyrthosiphon pisum (strain APS) (Acyrthosiphon pisum symbiotic bacterium).